Consider the following 513-residue polypeptide: GMP synthase [glutamine-hydrolyzing] (513 aa).

The Glutamine amidotransferase type-1 domain occupies 8 to 198; it reads MILVLDFGSQ…VFGVCECVGE (191 aa). The active-site Nucleophile is the Cys85. Active-site residues include His172 and Glu174. The GMPS ATP-PPase domain occupies 199–388; it reads WSMENFIEIE…LGIPDEIVWR (190 aa). Residue 226-232 participates in ATP binding; it reads SGGVDSS.

In terms of assembly, homodimer.

The catalysed reaction is XMP + L-glutamine + ATP + H2O = GMP + L-glutamate + AMP + diphosphate + 2 H(+). It functions in the pathway purine metabolism; GMP biosynthesis; GMP from XMP (L-Gln route): step 1/1. Catalyzes the synthesis of GMP from XMP. The sequence is that of GMP synthase [glutamine-hydrolyzing] from Bacillus licheniformis (strain ATCC 14580 / DSM 13 / JCM 2505 / CCUG 7422 / NBRC 12200 / NCIMB 9375 / NCTC 10341 / NRRL NRS-1264 / Gibson 46).